The following is a 261-amino-acid chain: Pimeloyl-[acyl-carrier protein] methyl ester esterase (261 aa).

In terms of domain architecture, AB hydrolase-1 spans 15 to 243 (HLVLLHGWGL…AAHAPFISHP (229 aa)). Residues Trp22, 83–84 (SL), and 144–148 (FLALQ) contribute to the substrate site. The active-site Nucleophile is the Ser83. Catalysis depends on residues Asp208 and His236. His236 lines the substrate pocket.

It belongs to the AB hydrolase superfamily. Carboxylesterase BioH family. Monomer.

It localises to the cytoplasm. It carries out the reaction 6-carboxyhexanoyl-[ACP] methyl ester + H2O = 6-carboxyhexanoyl-[ACP] + methanol + H(+). The protein operates within cofactor biosynthesis; biotin biosynthesis. Its function is as follows. The physiological role of BioH is to remove the methyl group introduced by BioC when the pimeloyl moiety is complete. It allows to synthesize pimeloyl-ACP via the fatty acid synthetic pathway through the hydrolysis of the ester bonds of pimeloyl-ACP esters. In Proteus mirabilis (strain HI4320), this protein is Pimeloyl-[acyl-carrier protein] methyl ester esterase.